We begin with the raw amino-acid sequence, 393 residues long: Lipid-A-disaccharide synthase (393 aa).

It belongs to the LpxB family.

It carries out the reaction a lipid X + a UDP-2-N,3-O-bis[(3R)-3-hydroxyacyl]-alpha-D-glucosamine = a lipid A disaccharide + UDP + H(+). It functions in the pathway bacterial outer membrane biogenesis; LPS lipid A biosynthesis. In terms of biological role, condensation of UDP-2,3-diacylglucosamine and 2,3-diacylglucosamine-1-phosphate to form lipid A disaccharide, a precursor of lipid A, a phosphorylated glycolipid that anchors the lipopolysaccharide to the outer membrane of the cell. This Rhodopseudomonas palustris (strain ATCC BAA-98 / CGA009) protein is Lipid-A-disaccharide synthase.